The sequence spans 215 residues: Leucyl/phenylalanyl-tRNA--protein transferase (215 aa).

Belongs to the L/F-transferase family.

The protein resides in the cytoplasm. It catalyses the reaction N-terminal L-lysyl-[protein] + L-leucyl-tRNA(Leu) = N-terminal L-leucyl-L-lysyl-[protein] + tRNA(Leu) + H(+). The enzyme catalyses N-terminal L-arginyl-[protein] + L-leucyl-tRNA(Leu) = N-terminal L-leucyl-L-arginyl-[protein] + tRNA(Leu) + H(+). It carries out the reaction L-phenylalanyl-tRNA(Phe) + an N-terminal L-alpha-aminoacyl-[protein] = an N-terminal L-phenylalanyl-L-alpha-aminoacyl-[protein] + tRNA(Phe). Functionally, functions in the N-end rule pathway of protein degradation where it conjugates Leu, Phe and, less efficiently, Met from aminoacyl-tRNAs to the N-termini of proteins containing an N-terminal arginine or lysine. This is Leucyl/phenylalanyl-tRNA--protein transferase from Campylobacter jejuni (strain RM1221).